The following is a 388-amino-acid chain: MESVFGRVRNETSERGKYGLVSVKAGKLQRKPGTNILQADHRKGVIYMQMASDELLHFYWKERARVSREVEDDYIIFPEEAEFIKIDECTTGRVYALKFKSSSQIHFYWMQEYSDEKDKETASLINQLIADPVNTTRTINSHNNSSSRGTDDSSTSQLLQLFGAASQDALQDFNWEVLSPTAEAPAILPRFPNVNESANMYRASSESNLNGPHATAGENGEDHEEATASPLDENIDYTHSRTLELLEQLQPLILNETTFVEPFSIDRESHRVITHPRVYPKIFPHSPSDLLRISGRAELSENRDFFKHLSSLMEAVAKPESESLREICNLSLEQVQSASGAELFLHALYDRLVNEGVIVISHITQEGSDGEVEEEGDVEMRESNEKDE.

In terms of domain architecture, Pru spans 15-132 (RGKYGLVSVK…SLINQLIADP (118 aa)). Disordered stretches follow at residues 202–227 (RASSESNLNGPHATAGENGEDHEEAT) and 368–388 (SDGEVEEEGDVEMRESNEKDE). The segment covering 368–377 (SDGEVEEEGD) has biased composition (acidic residues). Over residues 378–388 (VEMRESNEKDE) the composition is skewed to basic and acidic residues.

It belongs to the ADRM1 family. In terms of assembly, component of the 19S proteasome regulatory particle complex. The 2 S.pombe rpn13 homologs, rpn1301 and rpn1302 are present at a 0.2-1 ratio.

It localises to the cytoplasm. It is found in the nucleus. Component of the 26S proteasome, a multiprotein complex involved in the ATP-dependent degradation of ubiquitinated proteins. This complex plays a key role in the maintenance of protein homeostasis by removing misfolded or damaged proteins, which could impair cellular functions, and by removing proteins whose functions are no longer required. Therefore, the proteasome participates in numerous cellular processes, including cell cycle progression, apoptosis, or DNA damage repair. Within the complex, functions as a proteasomal ubiquitin receptor. This is Proteasomal ubiquitin receptor ADRM1 homolog rpn1302 (rpn1302) from Schizosaccharomyces pombe (strain 972 / ATCC 24843) (Fission yeast).